The following is a 523-amino-acid chain: Signal peptide peptidase-like 3 (523 aa).

Positions M1 to A35 are cleaved as a signal peptide. Over A36 to P207 the chain is Lumenal. The PA domain occupies S110–S182. The N-linked (GlcNAc...) asparagine glycan is linked to N159. Residues F208–V228 traverse the membrane as a helical segment. Residues G229–K254 are Cytoplasmic-facing. A helical membrane pass occupies residues T255–F272. The Lumenal segment spans residues F273 to S275. The helical transmembrane segment at T276–A298 threads the bilayer. Over S299 to N321 the chain is Cytoplasmic. The chain crosses the membrane as a helical span at residues V322–V342. Over H343–P347 the chain is Lumenal. Residues F348–V368 form a helical membrane-spanning segment. Residues H369–T377 lie on the Cytoplasmic side of the membrane. Residues A378 to F398 form a helical membrane-spanning segment. D387 is an active-site residue. The Lumenal portion of the chain corresponds to K399 to N430. A helical membrane pass occupies residues G431–F451. Residue D439 is part of the active site. Topologically, residues R452 to Y465 are cytoplasmic. A helical transmembrane segment spans residues F466–L486. Residues M487 to S489 are Lumenal-facing. Residues G490 to A510 form a helical membrane-spanning segment. The PAL signature appears at P492–L494. Topologically, residues K511–V523 are cytoplasmic.

It belongs to the peptidase A22B family. In terms of processing, glycosylated.

The protein localises to the endosome membrane. Intramembrane-cleaving aspartic protease (I-CLiP) that cleaves type II membrane signal peptides in the hydrophobic plane of the membrane. In Oryza sativa subsp. japonica (Rice), this protein is Signal peptide peptidase-like 3 (SPPL3).